A 153-amino-acid polypeptide reads, in one-letter code: Arachidonate 5-lipoxygenase-activating protein (153 aa).

Residues 1–8 (MDQEAMGN) are Lumenal-facing. The chain crosses the membrane as a helical span at residues 9–30 (IVLLAIVTLISVVQNAFFAHKV). At 31 to 52 (EHESKTHNGRSFQRTGTPAFER) the chain is on the cytoplasmic side. The helical transmembrane segment at 53-77 (VYTANQNCVDAYPTFLVVLWSAGLF) threads the bilayer. Over 78–80 (CSQ) the chain is Lumenal. A helical membrane pass occupies residues 81-102 (VPAAFAGLMYLFVRQKYFVGYL). Residues 103 to 107 (GERTQ) are Cytoplasmic-facing. An intramembrane segment occupies 108 to 115 (STPGYIFG). Residues 116 to 128 (KRIILFLFLMSLA) traverse the membrane as a helical segment. Residues 129–153 (GIFNYFLILFFGSDFENYIKTITTT) lie on the Lumenal side of the membrane.

This sequence belongs to the MAPEG family. In terms of assembly, homotrimer. Interacts with LTC4S and ALOX5.

The protein resides in the nucleus membrane. It localises to the endoplasmic reticulum membrane. Functionally, required for leukotriene biosynthesis by ALOX5 (5-lipoxygenase). Anchors ALOX5 to the membrane. Binds arachidonic acid, and could play an essential role in the transfer of arachidonic acid to ALOX5. Binds to MK-886, a compound that blocks the biosynthesis of leukotrienes. The chain is Arachidonate 5-lipoxygenase-activating protein (ALOX5AP) from Sus scrofa (Pig).